Here is a 380-residue protein sequence, read N- to C-terminus: Cytochrome b (380 aa).

Helical transmembrane passes span 34–54 (FGSL…LLAM), 78–99 (WLIR…YLHI), 114–134 (WNTG…GYVL), and 179–199 (FFAL…IHLT). Residues His84 and His98 each coordinate heme b. 2 residues coordinate heme b: His183 and His197. His202 serves as a coordination point for a ubiquinone. The next 4 membrane-spanning stretches (helical) occupy residues 227-247 (IKDI…ALFS), 289-309 (LGGV…PFLH), 321-341 (FSQL…WVGS), and 348-368 (FIII…ILFP).

The protein belongs to the cytochrome b family. The cytochrome bc1 complex contains 11 subunits: 3 respiratory subunits (MT-CYB, CYC1 and UQCRFS1), 2 core proteins (UQCRC1 and UQCRC2) and 6 low-molecular weight proteins (UQCRH/QCR6, UQCRB/QCR7, UQCRQ/QCR8, UQCR10/QCR9, UQCR11/QCR10 and a cleavage product of UQCRFS1). This cytochrome bc1 complex then forms a dimer. It depends on heme b as a cofactor.

The protein resides in the mitochondrion inner membrane. Its function is as follows. Component of the ubiquinol-cytochrome c reductase complex (complex III or cytochrome b-c1 complex) that is part of the mitochondrial respiratory chain. The b-c1 complex mediates electron transfer from ubiquinol to cytochrome c. Contributes to the generation of a proton gradient across the mitochondrial membrane that is then used for ATP synthesis. In Numida meleagris (Helmeted guineafowl), this protein is Cytochrome b (MT-CYB).